A 484-amino-acid chain; its full sequence is UDP-N-acetylmuramate--L-alanine ligase (484 aa).

Residue 122-128 (GTHGKTT) participates in ATP binding.

It belongs to the MurCDEF family.

The protein localises to the cytoplasm. The catalysed reaction is UDP-N-acetyl-alpha-D-muramate + L-alanine + ATP = UDP-N-acetyl-alpha-D-muramoyl-L-alanine + ADP + phosphate + H(+). The protein operates within cell wall biogenesis; peptidoglycan biosynthesis. Cell wall formation. This Mycobacterium sp. (strain JLS) protein is UDP-N-acetylmuramate--L-alanine ligase.